The sequence spans 400 residues: Tryptophan synthase beta chain (400 aa).

Lys90 is subject to N6-(pyridoxal phosphate)lysine.

It belongs to the TrpB family. As to quaternary structure, tetramer of two alpha and two beta chains. Pyridoxal 5'-phosphate serves as cofactor.

It carries out the reaction (1S,2R)-1-C-(indol-3-yl)glycerol 3-phosphate + L-serine = D-glyceraldehyde 3-phosphate + L-tryptophan + H2O. The protein operates within amino-acid biosynthesis; L-tryptophan biosynthesis; L-tryptophan from chorismate: step 5/5. Functionally, the beta subunit is responsible for the synthesis of L-tryptophan from indole and L-serine. The polypeptide is Tryptophan synthase beta chain (Bacillus velezensis (strain DSM 23117 / BGSC 10A6 / LMG 26770 / FZB42) (Bacillus amyloliquefaciens subsp. plantarum)).